Reading from the N-terminus, the 36-residue chain is Pancreatic polypeptide (36 aa).

At Y36 the chain carries Tyrosine amide.

The protein belongs to the NPY family.

It localises to the secreted. Hormone secreted by pancreatic cells that acts as a regulator of pancreatic and gastrointestinal functions. The polypeptide is Pancreatic polypeptide (PPY) (Anser anser anser (Western greylag goose)).